A 475-amino-acid polypeptide reads, in one-letter code: Ras-GEF domain-containing family member 1A (475 aa).

An N-terminal Ras-GEF domain is found at 33–164; sequence QDGSLVSGSL…SISQMTQNVL (132 aa). The Ras-GEF domain occupies 208–455; sequence DPLILAQQLT…FLASFENEGP (248 aa).

In terms of biological role, guanine nucleotide exchange factor (GEF) with specificity for rap2a and other Ras family proteins (in vitro). Plays a role in cell migration. In Xenopus tropicalis (Western clawed frog), this protein is Ras-GEF domain-containing family member 1A (rasgef1a).